The chain runs to 312 residues: Putative S-adenosyl-L-methionine-dependent methyltransferase BCG_1768c (312 aa).

S-adenosyl-L-methionine is bound by residues aspartate 130 and 159-160; that span reads DL.

Belongs to the UPF0677 family.

In terms of biological role, exhibits S-adenosyl-L-methionine-dependent methyltransferase activity. In Mycobacterium bovis (strain BCG / Pasteur 1173P2), this protein is Putative S-adenosyl-L-methionine-dependent methyltransferase BCG_1768c.